The primary structure comprises 293 residues: tRNA-cytidine(32) 2-sulfurtransferase (293 aa).

The short motif at 62–67 is the PP-loop motif element; sequence SGGKDS. Residues Cys-137, Cys-140, and Cys-228 each coordinate [4Fe-4S] cluster.

This sequence belongs to the TtcA family. As to quaternary structure, homodimer. It depends on Mg(2+) as a cofactor. [4Fe-4S] cluster serves as cofactor.

The protein resides in the cytoplasm. The catalysed reaction is cytidine(32) in tRNA + S-sulfanyl-L-cysteinyl-[cysteine desulfurase] + AH2 + ATP = 2-thiocytidine(32) in tRNA + L-cysteinyl-[cysteine desulfurase] + A + AMP + diphosphate + H(+). It participates in tRNA modification. Functionally, catalyzes the ATP-dependent 2-thiolation of cytidine in position 32 of tRNA, to form 2-thiocytidine (s(2)C32). The sulfur atoms are provided by the cysteine/cysteine desulfurase (IscS) system. The protein is tRNA-cytidine(32) 2-sulfurtransferase of Brucella abortus (strain S19).